We begin with the raw amino-acid sequence, 248 residues long: 2,3-bisphosphoglycerate-dependent phosphoglycerate mutase (248 aa).

Residues 8 to 15 (RHGESEWN), 21 to 22 (TG), Arg60, 87 to 90 (ERHY), Lys98, 114 to 115 (RR), and 183 to 184 (GN) contribute to the substrate site. His9 acts as the Tele-phosphohistidine intermediate in catalysis. Catalysis depends on Glu87, which acts as the Proton donor/acceptor.

It belongs to the phosphoglycerate mutase family. BPG-dependent PGAM subfamily.

The catalysed reaction is (2R)-2-phosphoglycerate = (2R)-3-phosphoglycerate. The protein operates within carbohydrate degradation; glycolysis; pyruvate from D-glyceraldehyde 3-phosphate: step 3/5. Its function is as follows. Catalyzes the interconversion of 2-phosphoglycerate and 3-phosphoglycerate. This is 2,3-bisphosphoglycerate-dependent phosphoglycerate mutase from Borreliella afzelii (strain PKo) (Borrelia afzelii).